A 205-amino-acid chain; its full sequence is Gap junction epsilon-1 protein (205 aa).

Over 1-23 (MSLNYIKNFYEGCVKPPTVIGQF) the chain is Cytoplasmic. The helical transmembrane segment at 24-44 (HTLFFGSIRIFFLGVLGFAVY) threads the bilayer. Over 45–76 (GNEALHFICDPDKREVNLFCYNQFRPITPQVS) the chain is Extracellular. Disulfide bonds link Cys53/Cys161 and Cys64/Cys148. A helical transmembrane segment spans residues 77–97 (FSALQLVIVLVPGALFHLYAA). Residues 98 to 112 (CKSINQECILQKPIY) are Cytoplasmic-facing. A helical membrane pass occupies residues 113 to 133 (TIIYILSVLLRISLAAIAFWL). The Extracellular segment spans residues 134–170 (QIYLFGFQVKSLYLCDARSLGENMIIRCMVPEHFEKT). The chain crosses the membrane as a helical span at residues 171-191 (IFLIAINTFTTITILLFVAEI). At 192 to 205 (FEIIFRRLYFPFRQ) the chain is on the cytoplasmic side.

The protein belongs to the connexin family. Beta-type (group I) subfamily. A connexon is composed of a hexamer of connexins. As to expression, not detected in lens or retina.

It is found in the cell membrane. In terms of biological role, mediates calcium-independent ATP release, suggesting activity as a hemichannel. Does not form functional gap junctions. The polypeptide is Gap junction epsilon-1 protein (GJE1) (Homo sapiens (Human)).